We begin with the raw amino-acid sequence, 68 residues long: Large ribosomal subunit protein uL29 (68 aa).

It belongs to the universal ribosomal protein uL29 family.

This Nitrobacter hamburgensis (strain DSM 10229 / NCIMB 13809 / X14) protein is Large ribosomal subunit protein uL29.